Consider the following 176-residue polypeptide: Nucleoside triphosphate/diphosphate phosphatase (176 aa).

The active-site Proton donor is Arg23. 6 residues coordinate Mg(2+): Asn87, Asp103, Asp105, Asp107, Asp120, and Glu123.

Belongs to the Ntdp family. Mg(2+) is required as a cofactor.

It carries out the reaction a ribonucleoside 5'-triphosphate + H2O = a ribonucleoside 5'-diphosphate + phosphate + H(+). The catalysed reaction is a ribonucleoside 5'-diphosphate + H2O = a ribonucleoside 5'-phosphate + phosphate + H(+). Its function is as follows. Has nucleoside phosphatase activity towards nucleoside triphosphates and nucleoside diphosphates. The polypeptide is Nucleoside triphosphate/diphosphate phosphatase (Bacillus cereus (strain G9842)).